A 126-amino-acid chain; its full sequence is Protein LLP homolog (126 aa).

A compositionally biased stretch (basic residues) spans 1–21; sequence MAKSLRSKWRRKMRAEKRKKV. Disordered stretches follow at residues 1 to 22 and 53 to 126; these read MAKS…KKVA and VPPE…RLAW. Positions 73–94 are enriched in basic and acidic residues; sequence DGGKMDLDTKRNKKTMLDEHGR. Basic residues predominate over residues 103-126; sequence QAKKLKAKRVGKNGKPKPKKRLAW.

It belongs to the learning-associated protein family.

It localises to the nucleus. The protein localises to the nucleolus. Its subcellular location is the chromosome. Functionally, regulates dendritic and spine growth and synaptic transmission. This chain is Protein LLP homolog (llph), found in Danio rerio (Zebrafish).